The sequence spans 96 residues: Cell division topological specificity factor (96 aa).

Belongs to the MinE family.

Its function is as follows. Prevents the cell division inhibition by proteins MinC and MinD at internal division sites while permitting inhibition at polar sites. This ensures cell division at the proper site by restricting the formation of a division septum at the midpoint of the long axis of the cell. This chain is Cell division topological specificity factor, found in Nitrosococcus oceani (strain ATCC 19707 / BCRC 17464 / JCM 30415 / NCIMB 11848 / C-107).